Consider the following 390-residue polypeptide: Cell division protein FtsZ (390 aa).

GTP-binding positions include 20 to 24 (GGGNN), 106 to 108 (GTG), glutamate 137, arginine 141, and aspartate 184.

It belongs to the FtsZ family. As to quaternary structure, homodimer. Polymerizes to form a dynamic ring structure in a strictly GTP-dependent manner. Interacts directly with several other division proteins.

It is found in the cytoplasm. Essential cell division protein that forms a contractile ring structure (Z ring) at the future cell division site. The regulation of the ring assembly controls the timing and the location of cell division. One of the functions of the FtsZ ring is to recruit other cell division proteins to the septum to produce a new cell wall between the dividing cells. Binds GTP and shows GTPase activity. The chain is Cell division protein FtsZ from Mycoplasmopsis pulmonis (strain UAB CTIP) (Mycoplasma pulmonis).